A 324-amino-acid polypeptide reads, in one-letter code: Nidogen-1 (324 aa).

Residues 16 to 178 form the NIDO domain; that stretch reads PFLADLDTTD…GVWVFEIGSP (163 aa). The N-linked (GlcNAc...) asparagine glycan is linked to Asn97. Sulfotyrosine occurs at positions 200 and 205. The tract at residues 219–259 is disordered; that stretch reads TQPFPSHSPRRGYPDPHNVPRTLAPSYEATERPHGIPTERT. Residues 247–259 are compositionally biased toward basic and acidic residues; the sequence is ATERPHGIPTERT. Positions 295–324 constitute an EGF-like domain; that stretch reads SQQTCANNRHQCSVHAECRDYATGFCCRCV. 2 disulfide bridges follow: Cys299–Cys312 and Cys306–Cys321.

In terms of assembly, interacts with FBLN1. Interacts with LGALS3BP. Interacts with PLXDC1. Interacts with SVEP1. N- and O-glycosylated.

The protein resides in the secreted. It is found in the extracellular space. Its subcellular location is the extracellular matrix. It localises to the basement membrane. Sulfated glycoprotein widely distributed in basement membranes and tightly associated with laminin. Also binds to collagen IV and perlecan. It probably has a role in cell-extracellular matrix interactions. The polypeptide is Nidogen-1 (Nid1) (Rattus norvegicus (Rat)).